A 331-amino-acid polypeptide reads, in one-letter code: Small ribosomal subunit protein uS2 (331 aa).

The protein belongs to the universal ribosomal protein uS2 family.

This Bradyrhizobium diazoefficiens (strain JCM 10833 / BCRC 13528 / IAM 13628 / NBRC 14792 / USDA 110) protein is Small ribosomal subunit protein uS2.